A 537-amino-acid chain; its full sequence is NEDD4-binding protein 3 (537 aa).

Ser-172 bears the Phosphoserine mark. 3 disordered regions span residues 173–234, 328–361, and 423–458; these read LDEG…VLSC, KELR…EARW, and QEQA…REGA. Residues 178–207 show a composition bias toward low complexity; it reads PEPSLSDSSSGGSFGRSPGTGPSPFSSSLG. Residues 295–501 adopt a coiled-coil conformation; that stretch reads VERLHEVAQK…RVLRYQREIQ (207 aa). The segment covering 351-361 has biased composition (basic and acidic residues); that stretch reads PNARPEEEARW.

It belongs to the N4BP3 family. Binds NEDD4. Interacts with 14-3-3 proteins. Interacts with MAVS.

It localises to the cytoplasmic vesicle. Its subcellular location is the cell projection. The protein localises to the axon. It is found in the dendrite. Its function is as follows. Plays a positive role in the antiviral innate immune signaling pathway. Mechanistically, interacts with MAVS and functions as a positive regulator to promote 'Lys-63'-linked polyubiquitination of MAVS and thus strengthens the interaction between MAVS and TRAF2. Also plays a role in axon and dendrite arborization during cranial nerve development. May also be important for neural crest migration and early development of other anterior structures including eye, brain and cranial cartilage. This is NEDD4-binding protein 3 (N4bp3) from Mus musculus (Mouse).